We begin with the raw amino-acid sequence, 96 residues long: Large ribosomal subunit protein uL23 (96 aa).

Belongs to the universal ribosomal protein uL23 family. As to quaternary structure, part of the 50S ribosomal subunit. Contacts protein L29, and trigger factor when it is bound to the ribosome.

Its function is as follows. One of the early assembly proteins it binds 23S rRNA. One of the proteins that surrounds the polypeptide exit tunnel on the outside of the ribosome. Forms the main docking site for trigger factor binding to the ribosome. In Halalkalibacterium halodurans (strain ATCC BAA-125 / DSM 18197 / FERM 7344 / JCM 9153 / C-125) (Bacillus halodurans), this protein is Large ribosomal subunit protein uL23.